A 364-amino-acid polypeptide reads, in one-letter code: 4-hydroxythreonine-4-phosphate dehydrogenase (364 aa).

Residues His138 and Thr139 each coordinate substrate. Residues His169, His214, and His269 each coordinate a divalent metal cation. Substrate is bound by residues Lys277, Asn286, and Arg295.

The protein belongs to the PdxA family. Homodimer. Requires a divalent metal cation as cofactor.

The protein localises to the cytoplasm. It carries out the reaction 4-(phosphooxy)-L-threonine + NAD(+) = 3-amino-2-oxopropyl phosphate + CO2 + NADH. The protein operates within cofactor biosynthesis; pyridoxine 5'-phosphate biosynthesis; pyridoxine 5'-phosphate from D-erythrose 4-phosphate: step 4/5. Catalyzes the NAD(P)-dependent oxidation of 4-(phosphooxy)-L-threonine (HTP) into 2-amino-3-oxo-4-(phosphooxy)butyric acid which spontaneously decarboxylates to form 3-amino-2-oxopropyl phosphate (AHAP). The chain is 4-hydroxythreonine-4-phosphate dehydrogenase from Bacteroides thetaiotaomicron (strain ATCC 29148 / DSM 2079 / JCM 5827 / CCUG 10774 / NCTC 10582 / VPI-5482 / E50).